Reading from the N-terminus, the 189-residue chain is Chitin synthase 2 (189 aa).

The protein belongs to the chitin synthase family. Class II subfamily.

It localises to the cell membrane. The enzyme catalyses [(1-&gt;4)-N-acetyl-beta-D-glucosaminyl](n) + UDP-N-acetyl-alpha-D-glucosamine = [(1-&gt;4)-N-acetyl-beta-D-glucosaminyl](n+1) + UDP + H(+). Polymerizes chitin, a structural polymer of the cell wall and septum, by transferring the sugar moiety of UDP-GlcNAc to the non-reducing end of the growing chitin polymer. The protein is Chitin synthase 2 (CHS2) of Ajellomyces dermatitidis (Blastomyces dermatitidis).